Here is a 99-residue protein sequence, read N- to C-terminus: Small ribosomal subunit protein bS20 (99 aa).

Belongs to the bacterial ribosomal protein bS20 family.

Functionally, binds directly to 16S ribosomal RNA. In Chlamydia pneumoniae (Chlamydophila pneumoniae), this protein is Small ribosomal subunit protein bS20.